The sequence spans 308 residues: NAD-dependent protein deacylase SIR4 (308 aa).

The transit peptide at 1 to 16 (MAATKLHPALRNAIRA) directs the protein to the mitochondrion. The Deacetylase sirtuin-type domain occupies 28–308 (TFDVQEGIKL…EVLPAALRQL (281 aa)). Residues 53–73 (GAGISTDSGIPDYRSPGRPPH) and 129–132 (QNVD) contribute to the NAD(+) site. Residue His147 is the Proton acceptor of the active site. Residues Cys155, Cys158, Cys211, and Cys214 each coordinate Zn(2+). NAD(+) contacts are provided by residues 251-253 (GTS), 277-279 (NSG), and Ile297.

The protein belongs to the sirtuin family. Class II subfamily. Zn(2+) serves as cofactor.

It localises to the mitochondrion matrix. The catalysed reaction is N(6)-acetyl-L-lysyl-[protein] + NAD(+) + H2O = 2''-O-acetyl-ADP-D-ribose + nicotinamide + L-lysyl-[protein]. NAD-dependent protein deacylase. Catalyzes the NAD-dependent hydrolysis of acyl groups from lysine residues. The sequence is that of NAD-dependent protein deacylase SIR4 from Monosiga brevicollis (Choanoflagellate).